A 215-amino-acid polypeptide reads, in one-letter code: Nascent polypeptide-associated complex subunit alpha (215 aa).

The tract at residues 1–81 (MPGEATETVP…SEKKARKAMS (81 aa)) is disordered. Over residues 9-28 (VPATEQELPQPQAETGSGTE) the composition is skewed to polar residues. Acidic residues predominate over residues 29–42 (SDSDESVPELEEQD). The residue at position 43 (Ser43) is a Phosphoserine; by ILK1. Residues 44–57 (TQATTQQAQLAAAA) are compositionally biased toward low complexity. A required for DNA-binding region spans residues 69–80 (QSRSEKKARKAM). The region spanning 70–135 (SRSEKKARKA…AKIEDLSQQA (66 aa)) is the NAC-A/B domain. An RNA/DNA-binding region spans residues 93–108 (RVTIRKSKNILFVITK). Phosphoserine is present on Ser132. An N6-acetyllysine; alternate modification is found at Lys142. A Glycyl lysine isopeptide (Lys-Gly) (interchain with G-Cter in SUMO2); alternate cross-link involves residue Lys142. Phosphothreonine; by GSK3-beta is present on Thr159. Thr161 bears the Phosphothreonine mark. Residues Ser166, Ser186, Ser191, and Ser203 each carry the phosphoserine modification. The region spanning 176-213 (VEVKDIELVMSQANVSRAKAVRALKNNSNDIVNAIMEL) is the UBA domain.

Belongs to the NAC-alpha family. Part of the nascent polypeptide-associated complex (NAC), which is a heterodimer of NACA and BTF3 (via NAC-A/B domains). NAC associates with ribosomes through the BTF3/NACB subunit and contacts the ribosomal protein L23, which is positioned near the exiting site. Both subunits can contact nascent polypeptide chains. NACA may also form homodimers, and only this form binds DNA. Interacts with TBP and JUN. In terms of processing, phosphorylation of Ser-43 by ILK during cell adhesion may promote nuclear localization. Phosphorylation of Thr-159 by GSK3B may promote proteasome mediated degradation.

The protein resides in the cytoplasm. It is found in the nucleus. Prevents inappropriate targeting of non-secretory polypeptides to the endoplasmic reticulum (ER). Binds to nascent polypeptide chains as they emerge from the ribosome and blocks their interaction with the signal recognition particle (SRP), which normally targets nascent secretory peptides to the ER. Also reduces the inherent affinity of ribosomes for protein translocation sites in the ER membrane (M sites). May act as a specific coactivator for JUN, binding to DNA and stabilizing the interaction of JUN homodimers with target gene promoters. This chain is Nascent polypeptide-associated complex subunit alpha (NACA), found in Pongo abelii (Sumatran orangutan).